The chain runs to 99 residues: CLAVATA3/ESR (CLE)-related protein 11 (99 aa).

The first 31 residues, Met-1–Thr-31, serve as a signal peptide directing secretion. 2 positions are modified to hydroxyproline: Pro-91 and Pro-94. O-linked (Ara...) hydroxyproline glycosylation occurs at Pro-94.

The protein belongs to the CLV3/ESR signal peptide family. Post-translationally, the O-glycosylation (arabinosylation) of the hydroxyproline Pro-94 enhances binding affinity of the CLE11p peptide for its receptor. Mostly expressed in seedlings, roots and siliques, and, to a lower extent, in leaves, flowers, stems and apex.

The protein resides in the secreted. It is found in the extracellular space. In terms of biological role, extracellular signal peptide that regulates cell fate. Represses root apical meristem maintenance. Regulates the transition of protophloem cells from proliferation to differentiation, thus impinging on postembryonic growth capacity of the root meristem; this signaling pathway requires CRN and CLV2. In Arabidopsis thaliana (Mouse-ear cress), this protein is CLAVATA3/ESR (CLE)-related protein 11.